A 225-amino-acid chain; its full sequence is Small ribosomal subunit protein uS7 (225 aa).

The residue at position 2 (serine 2) is an N-acetylserine. At threonine 27 the chain carries Phosphothreonine. Residues lysine 45 and lysine 203 each participate in a glycyl lysine isopeptide (Lys-Gly) (interchain with G-Cter in ubiquitin) cross-link.

Belongs to the universal ribosomal protein uS7 family. As to quaternary structure, component of the small ribosomal subunit (SSU). Mature yeast ribosomes consist of a small (40S) and a large (60S) subunit. The 40S small subunit contains 1 molecule of ribosomal RNA (18S rRNA) and 33 different proteins (encoded by 57 genes). The large 60S subunit contains 3 rRNA molecules (25S, 5.8S and 5S rRNA) and 46 different proteins (encoded by 81 genes). In terms of processing, N-terminally acetylated by acetyltransferase NatA.

Its subcellular location is the cytoplasm. Component of the ribosome, a large ribonucleoprotein complex responsible for the synthesis of proteins in the cell. The small ribosomal subunit (SSU) binds messenger RNAs (mRNAs) and translates the encoded message by selecting cognate aminoacyl-transfer RNA (tRNA) molecules. The large subunit (LSU) contains the ribosomal catalytic site termed the peptidyl transferase center (PTC), which catalyzes the formation of peptide bonds, thereby polymerizing the amino acids delivered by tRNAs into a polypeptide chain. The nascent polypeptides leave the ribosome through a tunnel in the LSU and interact with protein factors that function in enzymatic processing, targeting, and the membrane insertion of nascent chains at the exit of the ribosomal tunnel. In Saccharomyces cerevisiae (strain ATCC 204508 / S288c) (Baker's yeast), this protein is Small ribosomal subunit protein uS7.